The chain runs to 285 residues: 1-acyl-sn-glycerol-3-phosphate acyltransferase alpha (285 aa).

The N-terminal stretch at 1–28 (MELWPGAWTALLLLLLLLLSTLWFCSSS) is a signal peptide. Residues 29–34 (AKYFFK) lie on the Lumenal side of the membrane. A helical transmembrane segment spans residues 35–55 (MAFYNGWILFLAILAIPVCAV). Over 56–124 (RGRNVENMKI…PDRCVPIAKR (69 aa)) the chain is Cytoplasmic. The HXXXXD motif signature appears at 101–106 (HQSSLD). A helical membrane pass occupies residues 125-145 (ELLWAGSAGLACWLAGIIFID). Residues 146–189 (RKRTGDAISVMSEVAQTLLTQDVRVWVFPEGTRNHNGSMLPFKR) are Lumenal-facing. Residues 175 to 178 (EGTR) carry the EGTR motif motif.

It belongs to the 1-acyl-sn-glycerol-3-phosphate acyltransferase family. As to expression, widely expressed.

It localises to the endoplasmic reticulum membrane. It carries out the reaction a 1-acyl-sn-glycero-3-phosphate + an acyl-CoA = a 1,2-diacyl-sn-glycero-3-phosphate + CoA. The enzyme catalyses 1-(9Z-octadecenoyl)-sn-glycero-3-phosphate + (9Z)-octadecenoyl-CoA = 1,2-di-(9Z-octadecenoyl)-sn-glycero-3-phosphate + CoA. The catalysed reaction is 1-(9Z-octadecenoyl)-sn-glycero-3-phosphate + hexadecanoyl-CoA = 1-(9Z)-octadecenoyl-2-hexadecanoyl-sn-glycero-3-phosphate + CoA. It catalyses the reaction heptadecanoyl-CoA + 1-(9Z-octadecenoyl)-sn-glycero-3-phosphate = 1-(9Z)-octadecenoyl-2-heptadecanoyl-sn-glycero-3-phosphate + CoA. It carries out the reaction 1-(9Z-octadecenoyl)-sn-glycero-3-phosphate + octadecanoyl-CoA = 1-(9Z-octadecenoyl)-2-octadecanoyl-sn-glycero-3-phosphate + CoA. The enzyme catalyses 1-(9Z-octadecenoyl)-sn-glycero-3-phosphate + (9Z,12Z)-octadecadienoyl-CoA = 1-(9Z)-octadecenoyl-2-(9Z,12Z)-octadecadienoyl-sn-glycero-3-phosphate + CoA. The catalysed reaction is 1-(9Z-octadecenoyl)-sn-glycero-3-phosphate + tetradecanoyl-CoA = 1-(9Z)-octadecenoyl-2-tetradecanoyl-sn-glycero-3-phosphate + CoA. It catalyses the reaction pentadecanoyl-CoA + 1-(9Z-octadecenoyl)-sn-glycero-3-phosphate = 1-(9Z)-octadecenoyl-2-pentadecanoyl-sn-glycero-3-phosphate + CoA. It carries out the reaction 1-hexadecanoyl-sn-glycero-3-phosphate + (9Z)-octadecenoyl-CoA = 1-hexadecanoyl-2-(9Z-octadecenoyl)-sn-glycero-3-phosphate + CoA. The enzyme catalyses 1-(9Z,12Z,15Z)-octadecatrienoyl-sn-glycero-3-phosphate + (9Z)-octadecenoyl-CoA = 1-(9Z,12Z,15Z)-octadecatrienoyl-2-(9Z)-octadecenoyl-sn-glycero-3-phosphate + CoA. The catalysed reaction is 1-(6Z,9Z,12Z-octadecatrienoyl)-sn-glycero-3-phosphate + (9Z)-octadecenoyl-CoA = (6Z,9Z,12Z)-octadecatrienoyl-2-(9Z)-octadecenoyl-sn-glycero-3-phosphate + CoA. It catalyses the reaction 1-eicosanoyl-sn-glycero-3-phosphate + (9Z)-octadecenoyl-CoA = 1-eicosanoyl-2-(9Z)-octadecenoyl-sn-glycero-3-phosphate + CoA. It carries out the reaction 1-tetradecanoyl-sn-glycerol 3-phosphate + (9Z)-octadecenoyl-CoA = 1-tetradecanoyl-2-(9Z)-octadecenoyl-sn-glycero-3-phosphate + CoA. The enzyme catalyses 1-(9Z-octadecenoyl)-sn-glycero-3-phosphate + (5Z,8Z,11Z,14Z)-eicosatetraenoyl-CoA = 1-(9Z)-octadecenoyl-2-(5Z,8Z,11Z,14Z)-eicosatetraenoyl-sn-glycero-3-phosphate + CoA. The catalysed reaction is 1-(9Z-octadecenoyl)-sn-glycero-3-phosphate + dodecanoyl-CoA = 1-(9Z)-octadecenoyl-2-dodecanoyl-sn-glycero-3-phosphate + CoA. It catalyses the reaction (6Z)-octadecenoyl-CoA + 1-(9Z-octadecenoyl)-sn-glycero-3-phosphate = 1-(9Z)-octadecenoyl-2-(6Z)-octadecenoyl-sn-glycero-3-phosphate + CoA. It carries out the reaction (11Z)-octadecenoyl-CoA + 1-(9Z-octadecenoyl)-sn-glycero-3-phosphate = 1-(9Z)-octadecenoyl-2-(11Z)-octadecenoyl-sn-glycero-3-phosphate + CoA. The enzyme catalyses (9Z)-hexadecenoyl-CoA + 1-(9Z-octadecenoyl)-sn-glycero-3-phosphate = 1-(9Z-octadecenoyl)-2-(9Z-hexadecenoyl)-sn-glycero-3-phosphate + CoA. It functions in the pathway phospholipid metabolism; CDP-diacylglycerol biosynthesis; CDP-diacylglycerol from sn-glycerol 3-phosphate: step 2/3. In terms of biological role, converts 1-acyl-sn-glycerol-3-phosphate (lysophosphatidic acid or LPA) into 1,2-diacyl-sn-glycerol-3-phosphate (phosphatidic acid or PA) by incorporating an acyl moiety at the sn-2 position of the glycerol backbone. This Mus musculus (Mouse) protein is 1-acyl-sn-glycerol-3-phosphate acyltransferase alpha (Agpat1).